The chain runs to 315 residues: Leucine-rich repeat-containing protein 75B (315 aa).

Positions 1-23 (MGARLGRRAGPEAGSEAGAAAGC) are disordered. The segment covering 11-23 (PEAGSEAGAAAGC) has biased composition (low complexity). 2 LRR repeats span residues 182 to 195 (LAVLDLSFTGLSDE) and 207 to 220 (LPRLTQLLLNGNRL). The disordered stretch occupies residues 284 to 315 (PEGSAAGATTPASTWDSTAAGLGPEPQACCAR). The span at 286-297 (GSAAGATTPAST) shows a compositional bias: low complexity.

The protein belongs to the LRRC75 family.

May suppress myogenic differentiation by modulating MYOG expression and Erk1/2 signaling. The polypeptide is Leucine-rich repeat-containing protein 75B (Homo sapiens (Human)).